Reading from the N-terminus, the 481-residue chain is U6 small nuclear RNA (adenine-(43)-N(6))-methyltransferase (481 aa).

S-adenosyl-L-methionine contacts are provided by K82, G108, D131, T164, and N184.

The protein belongs to the methyltransferase superfamily. METTL16/RlmF family. In terms of assembly, self-associates. Interacts with dlc-1; the interaction is direct, and is required for nuclear localization of mett-10.

The protein resides in the nucleus. The enzyme catalyses an adenosine in mRNA + S-adenosyl-L-methionine = an N(6)-methyladenosine in mRNA + S-adenosyl-L-homocysteine + H(+). It catalyses the reaction adenosine in U6 snRNA + S-adenosyl-L-methionine = N(6)-methyladenosine in U6 snRNA + S-adenosyl-L-homocysteine + H(+). In terms of biological role, RNA N6-methyltransferase that methylates adenosine residues at the N(6) position of a subset of RNAs and is involved in S-adenosyl-L-methionine homeostasis by regulating splicing of S-adenosylmethionine synthase transcripts (sams-3, sams-4 and sams-5). Able to N6-methylate a subset of mRNAs containing the 5'UACAGAAAC-3' nonamer sequence. Plays a key role in S-adenosyl-L-methionine homeostasis: under rich-diet conditions, catalyzes N6-methylation of S-adenosylmethionine synthase mRNAs (sams-3, sams-4 and sams-5), directly inhibiting splicing and protein production of S-adenosylmethionine synthase. In addition to mRNAs, also able to mediate N6-methylation of U6 small nuclear RNA (U6 snRNA). Required for gamete production, inhibiting germ cell proliferative fate and ensuring germ cell meiotic development. Also promotes progression of the mitotic cell cycle in those germ cells that continue to proliferate. Plays a role in the development of the vulva, somatic gonad and embryo. In Caenorhabditis briggsae, this protein is U6 small nuclear RNA (adenine-(43)-N(6))-methyltransferase.